The sequence spans 94 residues: Integration host factor subunit beta (94 aa).

This sequence belongs to the bacterial histone-like protein family. As to quaternary structure, heterodimer of an alpha and a beta chain.

Its function is as follows. This protein is one of the two subunits of integration host factor, a specific DNA-binding protein that functions in genetic recombination as well as in transcriptional and translational control. In Mannheimia succiniciproducens (strain KCTC 0769BP / MBEL55E), this protein is Integration host factor subunit beta.